The sequence spans 135 residues: NADH-quinone oxidoreductase subunit K (135 aa).

The next 3 helical transmembrane spans lie at 33–53, 63–83, and 95–115; these read VLGL…FAIG, FLFM…AFVV, and IMFI…LAIL.

It belongs to the complex I subunit 4L family. In terms of assembly, NDH-1 is composed of 14 different subunits. Subunits NuoA, H, J, K, L, M, N constitute the membrane sector of the complex.

The protein localises to the cell inner membrane. The catalysed reaction is a quinone + NADH + 5 H(+)(in) = a quinol + NAD(+) + 4 H(+)(out). Its function is as follows. NDH-1 shuttles electrons from NADH, via FMN and iron-sulfur (Fe-S) centers, to quinones in the respiratory chain. The immediate electron acceptor for the enzyme in this species is believed to be ubiquinone. Couples the redox reaction to proton translocation (for every two electrons transferred, four hydrogen ions are translocated across the cytoplasmic membrane), and thus conserves the redox energy in a proton gradient. This is NADH-quinone oxidoreductase subunit K from Psychrobacter cryohalolentis (strain ATCC BAA-1226 / DSM 17306 / VKM B-2378 / K5).